Reading from the N-terminus, the 203-residue chain is Ras-related protein RABD2a (203 aa).

GTP is bound by residues 15–23 (GDSGVGKSC), 33–40 (YVESYIST), 63–67 (DTAGQ), 121–124 (NKSD), and 151–153 (SAK). The Effector region signature appears at 37 to 45 (YISTIGVDF). A disordered region spans residues 176–203 (QPAGNNARPPTVQIRGQPVAQKNGCCST). S-geranylgeranyl cysteine attachment occurs at residues Cys200 and Cys201.

The protein belongs to the small GTPase superfamily. Rab family. In terms of assembly, does not interact with GC5.

The protein localises to the golgi apparatus. It localises to the trans-Golgi network membrane. It is found in the golgi apparatus membrane. Its function is as follows. Protein transport. Regulator of membrane traffic from the Golgi apparatus towards the endoplasmic reticulum (ER). This is Ras-related protein RABD2a (RABD2A) from Arabidopsis thaliana (Mouse-ear cress).